Here is a 202-residue protein sequence, read N- to C-terminus: UPF0102 protein Dde_1093 (202 aa).

This sequence belongs to the UPF0102 family.

The sequence is that of UPF0102 protein Dde_1093 from Oleidesulfovibrio alaskensis (strain ATCC BAA-1058 / DSM 17464 / G20) (Desulfovibrio alaskensis).